The following is a 637-amino-acid chain: Glutamate--cysteine ligase catalytic subunit (637 aa).

N-acetylmethionine is present on Met-1. Phosphoserine occurs at positions 5 and 8.

It belongs to the glutamate--cysteine ligase type 3 family. In terms of assembly, heterodimer of a catalytic heavy chain and a regulatory light chain.

It catalyses the reaction L-cysteine + L-glutamate + ATP = gamma-L-glutamyl-L-cysteine + ADP + phosphate + H(+). The catalysed reaction is (2S)-2-aminobutanoate + L-glutamate + ATP = gamma-L-glutamyl-(2S)-2-aminobutanoate + ADP + phosphate + H(+). It participates in sulfur metabolism; glutathione biosynthesis; glutathione from L-cysteine and L-glutamate: step 1/2. With respect to regulation, feedback inhibition by glutathione. Functionally, catalyzes the ATP-dependent ligation of L-glutamate and L-cysteine and participates in the first and rate-limiting step in glutathione biosynthesis. This Homo sapiens (Human) protein is Glutamate--cysteine ligase catalytic subunit.